A 344-amino-acid polypeptide reads, in one-letter code: Interactor of constitutive active ROPs 1 (344 aa).

4 disordered regions span residues 1–74 (MPRP…ESQL), 92–139 (EAVK…KETD), 186–218 (HESL…DEMV), and 307–344 (FMDP…KGQK). Residues 19–29 (SSSSTSDSNHS) are compositionally biased toward low complexity. The stretch at 60–108 (QKKLGGRISDLESQLGQAQEELRLLKEQLANAEAVKKQAQDELHKKSKK) forms a coiled coil. Basic and acidic residues-rich tracts occupy residues 93–103 (AVKKQAQDELH), 114–139 (RVEE…KETD), and 186–195 (HESLGKENES). Residues 145-273 (VEKIAVEEEE…EQWRKAADAA (129 aa)) adopt a coiled-coil conformation. Positions 196-211 (LKNQLSDSASEISNVK) are enriched in polar residues.

Belongs to the ICR family. As to quaternary structure, homooligomer. Interacts with ARAC3, ARAC4, ARAC8, ARAC11 and SEC3A, but not with ICR2 or EXO70A1. As to expression, expressed in mature and germinating pollen. Expressed throughout the embryo but not in the hypophysis and quiescent center (QC). In roots, absent from the QC and the stem cells.

It is found in the cell membrane. It localises to the nucleus. Acts as a scaffold, mediating interaction of ROPs with different proteins. Required for primary and adventitious root maintenance, but not for their formation. Promotes the stabilization of ARAC11 on the plasma membrane of the pollen tube initiation site but not the activation of ARAC11. Regulates directionality of polar auxin transport, and is required for the formation of a stable auxin maximum and tip localized auxin gradient during embryogenesis, organogenesis, and meristem activity. Involved in exocytosis and in the recycling of PIN proteins back to the plasma membrane. This is Interactor of constitutive active ROPs 1 (ICR1) from Arabidopsis thaliana (Mouse-ear cress).